We begin with the raw amino-acid sequence, 585 residues long: uncharacterized protein (585 aa).

This is an uncharacterized protein from Escherichia coli (strain K12).